Here is a 231-residue protein sequence, read N- to C-terminus: DNA mismatch repair protein MutH (231 aa).

Belongs to the MutH family.

The protein resides in the cytoplasm. Sequence-specific endonuclease that cleaves unmethylated GATC sequences. It is involved in DNA mismatch repair. The sequence is that of DNA mismatch repair protein MutH from Salmonella typhi.